The following is a 239-amino-acid chain: Uridylate kinase (239 aa).

ATP is bound at residue 10 to 13 (KISG). The involved in allosteric activation by GTP stretch occupies residues 18 to 23 (GESGYG). G52 provides a ligand contact to UMP. ATP-binding residues include G53 and R57. UMP is bound by residues D72 and 133-140 (TGNPYFTT). The ATP site is built by T160, Y166, and D169.

It belongs to the UMP kinase family. As to quaternary structure, homohexamer.

It is found in the cytoplasm. It carries out the reaction UMP + ATP = UDP + ADP. The protein operates within pyrimidine metabolism; CTP biosynthesis via de novo pathway; UDP from UMP (UMPK route): step 1/1. Allosterically activated by GTP. Inhibited by UTP. Its function is as follows. Catalyzes the reversible phosphorylation of UMP to UDP. The chain is Uridylate kinase from Chlorobaculum tepidum (strain ATCC 49652 / DSM 12025 / NBRC 103806 / TLS) (Chlorobium tepidum).